The sequence spans 358 residues: Trace amine-associated receptor 7h (358 aa).

At 1-47 (MATDDESFPWDQDSILSRDLLSALSPQLCYENLNRSCVRSPYSPGPR) the chain is on the extracellular side. An N-linked (GlcNAc...) asparagine glycan is attached at Asn34. 2 cysteine pairs are disulfide-bonded: Cys37–Cys201 and Cys120–Cys205. Residues 48 to 68 (LILYAVFGFGAVLAVCGNLLV) traverse the membrane as a helical segment. Over 69–83 (MTSILHFRQLHSPAN) the chain is Cytoplasmic. Residues 84 to 104 (FLVASLACADLLVGLTVMPFS) traverse the membrane as a helical segment. Over 105–125 (MVRSVEGCWYFGDSYCKLHTS) the chain is Extracellular. A helical transmembrane segment spans residues 126 to 143 (FDMSFCCSSLLHLCFISV). Residues 144–166 (DRYIAVSDPLIYPIRFTASVSGK) are Cytoplasmic-facing. Residues 167–187 (CITFSWFLSIIYGFSLIYTGA) traverse the membrane as a helical segment. Residues 188 to 217 (SEAGLKDLVSALSCVGGCQIPMNQSCVLIN) are Extracellular-facing. Asn210 carries N-linked (GlcNAc...) asparagine glycosylation. The helical transmembrane segment at 218–238 (FLLFLVPTLVMMTVYSKIFLI) threads the bilayer. Over 239–274 (AKQQAQNMEKMSKQTTRASDSYKDRVAKRERKAAKT) the chain is Cytoplasmic. Residues 275-295 (LGIAVAAFLLSWLPYLIDSII) form a helical membrane-spanning segment. Topologically, residues 296–309 (DAFLGFITPSYVYE) are extracellular. A helical transmembrane segment spans residues 310 to 333 (ILVWIVYYNSAMNPLIYAFFYPWF). The Cytoplasmic segment spans residues 334–358 (RNAIKLIVTGKILKQNSSTTNLFSE).

It belongs to the G-protein coupled receptor 1 family.

It localises to the cell membrane. In terms of biological role, olfactory receptor specific for N,N-dimethylalkylamines trace amines. Trace amine compounds are enriched in animal body fluids and act on trace amine-associated receptors (TAARs) to elicit both intraspecific and interspecific innate behaviors. Ligand-binding causes a conformation change that triggers signaling via G(s)-class of G alpha proteins (GNAL or GNAS). The sequence is that of Trace amine-associated receptor 7h from Rattus norvegicus (Rat).